Here is a 338-residue protein sequence, read N- to C-terminus: MADKAPFDTDISTMTRFVMEEGRKAGGTGEMTQLLNSLCTAVKAISTAVRKAGIAHLYGIAGSTNVTGDQVKKLDVLSNDLVMNMLKSSFATCVLVSEEDKNAIIVEPEKRGKYVVCFDPLDGSSNIDCLVSIGTIFGIYRKKSTDEPSTKDALQPGRNLVAAGYALYGSATMLVLAGGSGVNSFMLDPAIGEFILVDKNVKIKKKGNIYSLNEGYAKDFDPAVTEYIQKKKFPPDNSSPYGARYVGSMVADVHRTLVYGGIFLYPANKKSPDGKLRLLYECNPMAFIMEKAGGMATTGKEAILDIVPTDIHQRAPVILGSPDDVQEFLEIYKKHAVK.

N-acetylalanine is present on Ala2. Residues 18–22 and 28–32 contribute to the AMP site; these read VMEEG and TGEMT. The Mg(2+) site is built by Asp69 and Glu98. 113–114 serves as a coordination point for AMP; that stretch reads KY. Positions 119, 121, and 122 each coordinate Mg(2+). 122–125 contributes to the substrate binding site; it reads DGSS. Arg141 is a binding site for AMP. Position 151 is an N6-succinyllysine (Lys151). Residues 213–216, 244–249, Tyr265, and 275–277 each bind substrate; these read NEGY, RYVGSM, and KLR. Phosphotyrosine occurs at positions 216, 245, and 265. Residue Glu281 participates in Mg(2+) binding.

The protein belongs to the FBPase class 1 family. As to quaternary structure, homotetramer. The cofactor is Mg(2+).

It carries out the reaction beta-D-fructose 1,6-bisphosphate + H2O = beta-D-fructose 6-phosphate + phosphate. The protein operates within carbohydrate biosynthesis; gluconeogenesis. Subject to complex allosteric regulation. The enzyme can assume an active R-state, or an inactive T-state. Intermediate conformations may exist. AMP acts as an allosteric inhibitor. AMP binding affects the turnover of bound substrate and not the affinity for substrate. Fructose 2,6-bisphosphate acts as a competitive inhibitor. Fructose 2,6-bisphosphate and AMP have synergistic effects. Functionally, catalyzes the hydrolysis of fructose 1,6-bisphosphate to fructose 6-phosphate in the presence of divalent cations, acting as a rate-limiting enzyme in gluconeogenesis. Plays a role in regulating glucose sensing and insulin secretion of pancreatic beta-cells. Appears to modulate glycerol gluconeogenesis in liver. Important regulator of appetite and adiposity; increased expression of the protein in liver after nutrient excess increases circulating satiety hormones and reduces appetite-stimulating neuropeptides and thus seems to provide a feedback mechanism to limit weight gain. This Oryctolagus cuniculus (Rabbit) protein is Fructose-1,6-bisphosphatase 1 (FBP1).